Here is a 278-residue protein sequence, read N- to C-terminus: Probable septum site-determining protein MinC (278 aa).

The disordered stretch occupies residues 104 to 167 (RTQQSVDPAP…ASHTPAAPQS (64 aa)).

This sequence belongs to the MinC family. In terms of assembly, interacts with MinD and FtsZ.

Functionally, cell division inhibitor that blocks the formation of polar Z ring septums. Rapidly oscillates between the poles of the cell to destabilize FtsZ filaments that have formed before they mature into polar Z rings. Prevents FtsZ polymerization. The protein is Probable septum site-determining protein MinC of Bordetella avium (strain 197N).